A 159-amino-acid polypeptide reads, in one-letter code: ATP synthase subunit b 2 (159 aa).

A helical membrane pass occupies residues 1–21; sequence MDATFWALVALIIFVGILLYM.

The protein belongs to the ATPase B chain family. In terms of assembly, F-type ATPases have 2 components, F(1) - the catalytic core - and F(0) - the membrane proton channel. F(1) has five subunits: alpha(3), beta(3), gamma(1), delta(1), epsilon(1). F(0) has three main subunits: a(1), b(2) and c(10-14). The alpha and beta chains form an alternating ring which encloses part of the gamma chain. F(1) is attached to F(0) by a central stalk formed by the gamma and epsilon chains, while a peripheral stalk is formed by the delta and b chains.

It localises to the cell inner membrane. In terms of biological role, f(1)F(0) ATP synthase produces ATP from ADP in the presence of a proton or sodium gradient. F-type ATPases consist of two structural domains, F(1) containing the extramembraneous catalytic core and F(0) containing the membrane proton channel, linked together by a central stalk and a peripheral stalk. During catalysis, ATP synthesis in the catalytic domain of F(1) is coupled via a rotary mechanism of the central stalk subunits to proton translocation. Its function is as follows. Component of the F(0) channel, it forms part of the peripheral stalk, linking F(1) to F(0). The chain is ATP synthase subunit b 2 from Chelativorans sp. (strain BNC1).